The primary structure comprises 184 residues: Phosducin-like protein 3 (184 aa).

The thioredoxin fold stretch occupies residues 45–184 (HGELKEIDEQ…VKNNKFKEDD (140 aa)).

This sequence belongs to the phosducin family.

This chain is Phosducin-like protein 3 (phlp3), found in Dictyostelium discoideum (Social amoeba).